We begin with the raw amino-acid sequence, 704 residues long: Polyribonucleotide nucleotidyltransferase (704 aa).

The Mg(2+) site is built by aspartate 487 and aspartate 493. The KH domain occupies 554-613 (PRLLTIKIHPDKIREVIGKGGSTIQAITKETGTQIDIQDDGTIIIASVNAIAAQAAKSRI). Positions 623–691 (GRIYEGKVAK…KQGRIRLSIK (69 aa)) constitute an S1 motif domain.

The protein belongs to the polyribonucleotide nucleotidyltransferase family. Component of the RNA degradosome, which is a multiprotein complex involved in RNA processing and mRNA degradation. Mg(2+) serves as cofactor.

It localises to the cytoplasm. It carries out the reaction RNA(n+1) + phosphate = RNA(n) + a ribonucleoside 5'-diphosphate. Functionally, involved in mRNA degradation. Catalyzes the phosphorolysis of single-stranded polyribonucleotides processively in the 3'- to 5'-direction. The polypeptide is Polyribonucleotide nucleotidyltransferase (Xanthomonas campestris pv. campestris (strain 8004)).